A 94-amino-acid polypeptide reads, in one-letter code: Large ribosomal subunit protein bL27 (94 aa).

Positions 1–9 are excised as a propeptide; it reads MNLANLQLF. Positions 11–33 are disordered; the sequence is HKKGGGSTSNGRDSQAKRLGAKA.

This sequence belongs to the bacterial ribosomal protein bL27 family. Post-translationally, the N-terminus is cleaved by ribosomal processing cysteine protease Prp.

The chain is Large ribosomal subunit protein bL27 from Streptococcus agalactiae serotype V (strain ATCC BAA-611 / 2603 V/R).